We begin with the raw amino-acid sequence, 596 residues long: Probable lysosomal cobalamin transporter (596 aa).

10 consecutive transmembrane segments (helical) span residues 7–27 (AFIWVAYAVAVGIVALIAAIF), 46–66 (IITLTSLLATVLLLPVDIALV), 95–115 (IVYYALYSLDAVLCLLVIPFT), 145–165 (TLFFVVLVVILFLVGFFAPVA), 196–216 (LLISLGTLLYILYTSVGLALL), 313–333 (LVGGILLLLLSVIIWASMLIT), 350–370 (ILGSINIFQPLNWVFVKSSIV), 376–396 (VLMALLVLFLFSSSVTGIAVI), 420–440 (MATVMLTLIILAINYSIAMII), and 507–527 (FFGALAFWAQFVFLAIFLIVF). The tract at residues 566–596 (WQDIRGKAKNQTPSRGAAGRGIRGDDDHDDD) is disordered. Basic and acidic residues predominate over residues 587–596 (IRGDDDHDDD).

The protein belongs to the LIMR family. LMBRD1 subfamily.

The protein localises to the lysosome membrane. Probable lysosomal cobalamin transporter. Required to export cobalamin from lysosomes allowing its conversion to cofactors. The chain is Probable lysosomal cobalamin transporter from Sclerotinia sclerotiorum (strain ATCC 18683 / 1980 / Ss-1) (White mold).